Reading from the N-terminus, the 333-residue chain is N-acetyl-gamma-glutamyl-phosphate reductase (333 aa).

Cysteine 145 is a catalytic residue.

Belongs to the NAGSA dehydrogenase family. Type 1 subfamily.

Its subcellular location is the cytoplasm. The enzyme catalyses N-acetyl-L-glutamate 5-semialdehyde + phosphate + NADP(+) = N-acetyl-L-glutamyl 5-phosphate + NADPH + H(+). It functions in the pathway amino-acid biosynthesis; L-arginine biosynthesis; N(2)-acetyl-L-ornithine from L-glutamate: step 3/4. Functionally, catalyzes the NADPH-dependent reduction of N-acetyl-5-glutamyl phosphate to yield N-acetyl-L-glutamate 5-semialdehyde. The polypeptide is N-acetyl-gamma-glutamyl-phosphate reductase (Salinispora arenicola (strain CNS-205)).